The following is a 499-amino-acid chain: Probable dipeptidase B (499 aa).

Residue Cys-26 is part of the active site.

This sequence belongs to the peptidase C69 family.

It carries out the reaction an L-aminoacyl-L-amino acid + H2O = 2 an L-alpha-amino acid. The chain is Probable dipeptidase B (pepDB) from Streptococcus pyogenes serotype M18 (strain MGAS8232).